Reading from the N-terminus, the 76-residue chain is Omega/Kappa-hexatoxin-Hv1h (76 aa).

The signal sequence occupies residues 1–22 (MNTATGFIVLLVLATILGGIEA). Positions 23-35 (GESHMRKDAMGRV) are excised as a propeptide. 3 cysteine pairs are disulfide-bonded: cysteine 40/cysteine 55, cysteine 47/cysteine 60, and cysteine 54/cysteine 74.

The protein belongs to the neurotoxin 08 (Shiva) family. 02 (omega/kappa toxin) subfamily. As to expression, expressed by the venom gland.

Its subcellular location is the secreted. Its function is as follows. Toxin that may inhibit ion channels. The chain is Omega/Kappa-hexatoxin-Hv1h from Hadronyche versuta (Blue mountains funnel-web spider).